The following is a 292-amino-acid chain: 2-(5''-triphosphoribosyl)-3'-dephosphocoenzyme-A synthase (292 aa).

Belongs to the CitG/MdcB family.

It carries out the reaction 3'-dephospho-CoA + ATP = 2'-(5''-triphospho-alpha-D-ribosyl)-3'-dephospho-CoA + adenine. Catalyzes the formation of 2-(5''-triphosphoribosyl)-3'-dephosphocoenzyme-A, the precursor of the prosthetic group of the holo-acyl carrier protein (gamma chain) of citrate lyase, from ATP and dephospho-CoA. In Escherichia coli O127:H6 (strain E2348/69 / EPEC), this protein is 2-(5''-triphosphoribosyl)-3'-dephosphocoenzyme-A synthase.